The chain runs to 278 residues: Purine nucleoside phosphorylase YlmD (278 aa).

Zn(2+)-binding residues include H87, C132, and H149.

The protein belongs to the purine nucleoside phosphorylase YfiH/LACC1 family. In terms of assembly, homodimer. Cu(2+) serves as cofactor. Zn(2+) is required as a cofactor.

The catalysed reaction is adenosine + phosphate = alpha-D-ribose 1-phosphate + adenine. It catalyses the reaction S-methyl-5'-thioadenosine + phosphate = 5-(methylsulfanyl)-alpha-D-ribose 1-phosphate + adenine. The enzyme catalyses inosine + phosphate = alpha-D-ribose 1-phosphate + hypoxanthine. It carries out the reaction adenosine + H2O + H(+) = inosine + NH4(+). Functionally, purine nucleoside enzyme that catalyzes the phosphorolysis of adenosine and inosine nucleosides, yielding D-ribose 1-phosphate and the respective free bases, adenine and hypoxanthine. Also catalyzes the phosphorolysis of S-methyl-5'-thioadenosine into adenine and S-methyl-5-thio-alpha-D-ribose 1-phosphate. Also has adenosine deaminase activity. The sequence is that of Purine nucleoside phosphorylase YlmD (ylmD) from Bacillus subtilis (strain 168).